The sequence spans 789 residues: Leucine-rich repeat and fibronectin type-III domain-containing protein 2 (789 aa).

An N-terminal signal peptide occupies residues 1 to 20 (METLLGGLLAFGMAFAVVDA). In terms of domain architecture, LRRNT spans 21-52 (CPKYCVCQNLSESLGTLCPSKGLLFVPPDIDR). Over 21-534 (CPKYCVCQNL…MHSQILGGTM (514 aa)) the chain is Extracellular. Asn-29 carries N-linked (GlcNAc...) asparagine glycosylation. 7 LRR repeats span residues 53–74 (RTVELRLGGNFIIHISRQDFAN), 77–98 (GLVDLTLSRNTISHIQPFSFLD), 101–122 (SLRSLHLDSNRLPSLGEDTLRG), 125–146 (NLQHLIVNNNQLGGIADEAFED), 150–171 (TLEDLDLSYNNLHGLPWDSVRR), 174–195 (NLHQLSLDHNLLDHIAEGTFAD), and 198–219 (KLARLDLTSNRLQKLPPDPIFA). The LRRCT domain occupies 242–288 (NPLHCNCELLWLRRLERDDDLETCGSPGGLKGRYFWHVREEEFVCEP). One can recognise an Ig-like domain in the interval 289 to 375 (PLITQHTHKL…GEATAMVEVS (87 aa)). Cys-310 and Cys-359 are disulfide-bonded. Asn-332, Asn-341, and Asn-384 each carry an N-linked (GlcNAc...) asparagine glycan. The interval 383 to 424 (SNSTSRTAPPKSRLSDITGSSKTSRGGGGSGGGEPPKSPPER) is disordered. Over residues 407–416 (RGGGGSGGGE) the composition is skewed to gly residues. In terms of domain architecture, Fibronectin type-III spans 421–518 (PPERAVLVSE…GCAQFFTKAD (98 aa)). A helical transmembrane segment spans residues 535-555 (ILVIGGIIVATLLVFIVILMV). Over 556 to 789 (RYKVCNHEAP…SSEWVMESTV (234 aa)) the chain is Cytoplasmic. Disordered regions lie at residues 577-602 (SQTNGAQPPPPSSAPAGAPPQGPPKV), 619-654 (SDSSSSSSLGSGEAAGLGRAPWRIPPSAPRPKPSLD), and 668-702 (QRKEELLDSRTPAGRGAGTSARGHHSDREPLLGPP). A compositionally biased stretch (pro residues) spans 583 to 599 (QPPPPSSAPAGAPPQGP). Low complexity predominate over residues 619–638 (SDSSSSSSLGSGEAAGLGRA). The segment covering 641–650 (RIPPSAPRPK) has biased composition (pro residues). The PDZ-binding signature appears at 786–789 (ESTV).

It belongs to the LRFN family. Forms heteromeric complexes with LRFN1, LRFN3, LRFN4 and LRFN5. Can form homomeric complexes, but not across cell junctions. Directly interacts with 2 NMDA receptor subunits GRIN1 and GRIN2A. Interacts with DLG1, DLG2, DLG3 and DLG4. Glycosylated.

The protein localises to the membrane. It localises to the synapse. Its subcellular location is the postsynaptic cell membrane. In terms of biological role, promotes neurite outgrowth in hippocampal neurons. Enhances the cell surface expression of 2 NMDA receptor subunits GRIN1 and GRIN2A. May play a role in redistributing DLG4 to the cell periphery. This is Leucine-rich repeat and fibronectin type-III domain-containing protein 2 (LRFN2) from Homo sapiens (Human).